Reading from the N-terminus, the 98-residue chain is Large ribosomal subunit protein bL28 (98 aa).

This sequence belongs to the bacterial ribosomal protein bL28 family.

In Beijerinckia indica subsp. indica (strain ATCC 9039 / DSM 1715 / NCIMB 8712), this protein is Large ribosomal subunit protein bL28.